Here is a 308-residue protein sequence, read N- to C-terminus: C-4 methylsterol oxidase (308 aa).

Residues 56 to 76 (LLFFLTHEIFYFGRCLPWAII) form a helical membrane-spanning segment. In terms of domain architecture, Fatty acid hydroxylase spans 145–282 (WAVFFVLEDT…FRWWDFILDT (138 aa)). The Histidine box-1 signature appears at 160 to 164 (HRGLH). A Histidine box-2 motif is present at residues 173-177 (HKQHH). Residues 257–263 (HHDEHHH) carry the Histidine box-3 motif.

Belongs to the sterol desaturase family. It depends on Fe cation as a cofactor.

It localises to the endoplasmic reticulum membrane. The catalysed reaction is 4,4-dimethyl-5alpha-cholest-7-en-3beta-ol + 6 Fe(II)-[cytochrome b5] + 3 O2 + 5 H(+) = 4alpha-carboxy-4beta-methyl-5alpha-cholest-7-ene-3beta-ol + 6 Fe(III)-[cytochrome b5] + 4 H2O. It functions in the pathway steroid biosynthesis; zymosterol biosynthesis; zymosterol from lanosterol: step 3/6. Its function is as follows. C-4 methylsterol oxidase; part of the third module of ergosterol biosynthesis pathway that includes the late steps of the pathway. ERG25 is a catalytic component of the C-4 demethylation complex that catalyzes the conversion of 4,4-dimethylfecosterol into fecosterol via 4-methylfecosterol. Catalyzes the three-step monooxygenation required for the demethylation of 4,4-dimethyl and 4alpha-methylsterols. The third module or late pathway involves the ergosterol synthesis itself through consecutive reactions that mainly occur in the endoplasmic reticulum (ER) membrane. Firstly, the squalene synthase ERG9 catalyzes the condensation of 2 farnesyl pyrophosphate moieties to form squalene, which is the precursor of all steroids. Squalene synthase is crucial for balancing the incorporation of farnesyl diphosphate (FPP) into sterol and nonsterol isoprene synthesis. Secondly, the squalene epoxidase ERG1 catalyzes the stereospecific oxidation of squalene to (S)-2,3-epoxysqualene, which is considered to be a rate-limiting enzyme in steroid biosynthesis. Then, the lanosterol synthase ERG7 catalyzes the cyclization of (S)-2,3 oxidosqualene to lanosterol, a reaction that forms the sterol core. In the next steps, lanosterol is transformed to zymosterol through a complex process involving various demethylation, reduction and desaturation reactions. The lanosterol 14-alpha-demethylase ERG11 (also known as CYP51) catalyzes C14-demethylation of lanosterol to produce 4,4'-dimethyl cholesta-8,14,24-triene-3-beta-ol, which is critical for ergosterol biosynthesis. The C-14 reductase ERG24 reduces the C14=C15 double bond of 4,4-dimethyl-cholesta-8,14,24-trienol to produce 4,4-dimethyl-cholesta-8,24-dienol. 4,4-dimethyl-cholesta-8,24-dienol is substrate of the C-4 demethylation complex ERG25-ERG26-ERG27 in which ERG25 catalyzes the three-step monooxygenation required for the demethylation of 4,4-dimethyl and 4alpha-methylsterols, ERG26 catalyzes the oxidative decarboxylation that results in a reduction of the 3-beta-hydroxy group at the C-3 carbon to an oxo group, and ERG27 is responsible for the reduction of the keto group on the C-3. ERG28 has a role as a scaffold to help anchor ERG25, ERG26 and ERG27 to the endoplasmic reticulum and ERG29 regulates the activity of the iron-containing C4-methylsterol oxidase ERG25. Then, the sterol 24-C-methyltransferase ERG6 catalyzes the methyl transfer from S-adenosyl-methionine to the C-24 of zymosterol to form fecosterol. The C-8 sterol isomerase ERG2 catalyzes the reaction which results in unsaturation at C-7 in the B ring of sterols and thus converts fecosterol to episterol. The sterol-C5-desaturase ERG3 then catalyzes the introduction of a C-5 double bond in the B ring to produce 5-dehydroepisterol. The C-22 sterol desaturase ERG5 further converts 5-dehydroepisterol into ergosta-5,7,22,24(28)-tetraen-3beta-ol by forming the C-22(23) double bond in the sterol side chain. Finally, ergosta-5,7,22,24(28)-tetraen-3beta-ol is substrate of the C-24(28) sterol reductase ERG4 to produce ergosterol. This is C-4 methylsterol oxidase from Candida albicans (strain SC5314 / ATCC MYA-2876) (Yeast).